A 505-amino-acid chain; its full sequence is L-carnitine/gamma-butyrobetaine antiporter (505 aa).

Helical transmembrane passes span 10 to 30 (IEPK…WLTV), 51 to 71 (WGWA…WLVF), 92 to 112 (IFMM…SIEI), 143 to 163 (GPLP…FFFV), 195 to 215 (FYLV…TPLV), 231 to 251 (LDAI…ACGL), 263 to 283 (SYLS…SFIM), 316 to 336 (WTVF…IFLA), 347 to 367 (LCFG…TVLG), 403 to 423 (LSTA…VTLI), 446 to 466 (LLVR…LLAL), and 475 to 495 (AIIA…LSFI).

It belongs to the BCCT transporter (TC 2.A.15) family. CaiT subfamily. In terms of assembly, homotrimer.

The protein resides in the cell inner membrane. The enzyme catalyses 4-(trimethylamino)butanoate(in) + (R)-carnitine(out) = 4-(trimethylamino)butanoate(out) + (R)-carnitine(in). It participates in amine and polyamine metabolism; carnitine metabolism. In terms of biological role, catalyzes the exchange of L-carnitine for gamma-butyrobetaine. The polypeptide is L-carnitine/gamma-butyrobetaine antiporter (Salmonella typhi).